A 99-amino-acid polypeptide reads, in one-letter code: Small ribosomal subunit protein bS20 (99 aa).

The protein belongs to the bacterial ribosomal protein bS20 family.

Its function is as follows. Binds directly to 16S ribosomal RNA. This chain is Small ribosomal subunit protein bS20, found in Caldicellulosiruptor saccharolyticus (strain ATCC 43494 / DSM 8903 / Tp8T 6331).